The primary structure comprises 212 residues: Uridine kinase (212 aa).

ATP is bound at residue 12 to 19 (GGSGGGKT).

It belongs to the uridine kinase family.

The protein localises to the cytoplasm. It carries out the reaction uridine + ATP = UMP + ADP + H(+). The catalysed reaction is cytidine + ATP = CMP + ADP + H(+). Its pathway is pyrimidine metabolism; CTP biosynthesis via salvage pathway; CTP from cytidine: step 1/3. It participates in pyrimidine metabolism; UMP biosynthesis via salvage pathway; UMP from uridine: step 1/1. The protein is Uridine kinase of Streptococcus pneumoniae serotype 2 (strain D39 / NCTC 7466).